Reading from the N-terminus, the 210-residue chain is Adenylate kinase (210 aa).

An ATP-binding site is contributed by 10 to 15 (GSGKGT). An NMP region spans residues 28–57 (SVGKVLRTVMESNTAEADVVKKFIKSGKLV). Residues Arg-34, 55–57 (KLV), 83–86 (GYPR), and Gln-90 contribute to the AMP site. Positions 120–158 (GRISCTDCGTIYNKLYCMPKINGVCDICNSSSFQNRVDD) are LID. Arg-121 lines the ATP pocket. 2 residues coordinate Zn(2+): Cys-124 and Cys-127. ATP is bound at residue 130-131 (IY). Positions 144 and 147 each coordinate Zn(2+). AMP-binding residues include Arg-155 and Arg-166. Residue Gln-194 participates in ATP binding.

The protein belongs to the adenylate kinase family. As to quaternary structure, monomer.

It is found in the cytoplasm. The enzyme catalyses AMP + ATP = 2 ADP. Its pathway is purine metabolism; AMP biosynthesis via salvage pathway; AMP from ADP: step 1/1. Its function is as follows. Catalyzes the reversible transfer of the terminal phosphate group between ATP and AMP. Plays an important role in cellular energy homeostasis and in adenine nucleotide metabolism. In Orientia tsutsugamushi (strain Boryong) (Rickettsia tsutsugamushi), this protein is Adenylate kinase.